A 95-amino-acid chain; its full sequence is Cobalt transport protein CbiN (95 aa).

Transmembrane regions (helical) follow at residues His-5 to Gly-25 and Leu-67 to Tyr-87.

Belongs to the CbiN family. As to quaternary structure, forms an energy-coupling factor (ECF) transporter complex composed of an ATP-binding protein (A component, CbiO), a transmembrane protein (T component, CbiQ) and 2 possible substrate-capture proteins (S components, CbiM and CbiN) of unknown stoichimetry.

It localises to the cell membrane. Its pathway is cofactor biosynthesis; adenosylcobalamin biosynthesis. In terms of biological role, part of the energy-coupling factor (ECF) transporter complex CbiMNOQ involved in cobalt import. The polypeptide is Cobalt transport protein CbiN (Methanothermobacter thermautotrophicus (strain ATCC 29096 / DSM 1053 / JCM 10044 / NBRC 100330 / Delta H) (Methanobacterium thermoautotrophicum)).